Here is a 161-residue protein sequence, read N- to C-terminus: Cytidylate kinase (161 aa).

An ATP-binding site is contributed by 7–15 (GLAGTGTTT).

This sequence belongs to the cytidylate kinase family. Type 2 subfamily.

The protein resides in the cytoplasm. It carries out the reaction CMP + ATP = CDP + ADP. The catalysed reaction is dCMP + ATP = dCDP + ADP. In Methanothermobacter thermautotrophicus (strain ATCC 29096 / DSM 1053 / JCM 10044 / NBRC 100330 / Delta H) (Methanobacterium thermoautotrophicum), this protein is Cytidylate kinase (cmk).